Reading from the N-terminus, the 197-residue chain is SIGLEC family-like protein 1 (197 aa).

A helical transmembrane segment spans residues 118 to 138 (GAIYAGIVIALLFLCLLPLIV). A disordered region spans residues 160–179 (VRASQELEMSLKPEEPGKPV). A compositionally biased stretch (basic and acidic residues) spans 162–176 (ASQELEMSLKPEEPG).

The protein localises to the membrane. The polypeptide is SIGLEC family-like protein 1 (SIGLECL1) (Homo sapiens (Human)).